The following is a 663-amino-acid chain: UvrABC system protein B (663 aa).

The region spanning 31–271 (DNIESGEKAQ…EQSISKIQAE (241 aa)) is the Helicase ATP-binding domain. An ATP-binding site is contributed by 44–51 (GATGTGKT). Positions 97–120 (YYDYYQPEAYVPSSDTYIEKDSSV) match the Beta-hairpin motif. One can recognise a Helicase C-terminal domain in the interval 435-601 (QMDDLLGEIN…TIKKDIRDLI (167 aa)). The 36-residue stretch at 627-662 (QEAIKQLQKNMQEAAELLDFELAAQLRDLILELKAI) folds into the UVR domain.

Belongs to the UvrB family. Forms a heterotetramer with UvrA during the search for lesions. Interacts with UvrC in an incision complex.

The protein resides in the cytoplasm. Functionally, the UvrABC repair system catalyzes the recognition and processing of DNA lesions. A damage recognition complex composed of 2 UvrA and 2 UvrB subunits scans DNA for abnormalities. Upon binding of the UvrA(2)B(2) complex to a putative damaged site, the DNA wraps around one UvrB monomer. DNA wrap is dependent on ATP binding by UvrB and probably causes local melting of the DNA helix, facilitating insertion of UvrB beta-hairpin between the DNA strands. Then UvrB probes one DNA strand for the presence of a lesion. If a lesion is found the UvrA subunits dissociate and the UvrB-DNA preincision complex is formed. This complex is subsequently bound by UvrC and the second UvrB is released. If no lesion is found, the DNA wraps around the other UvrB subunit that will check the other stand for damage. This is UvrABC system protein B from Streptococcus equi subsp. zooepidemicus (strain MGCS10565).